Reading from the N-terminus, the 421-residue chain is Cell division protein FtsZ (421 aa).

Residues 26–30, 132–134, Glu-163, Arg-167, and Asn-211 each bind GTP; these read GGGGN and GTG.

This sequence belongs to the FtsZ family. In terms of assembly, homodimer. Polymerizes to form a dynamic ring structure in a strictly GTP-dependent manner. Interacts directly with several other division proteins.

It localises to the cytoplasm. In terms of biological role, essential cell division protein that forms a contractile ring structure (Z ring) at the future cell division site. The regulation of the ring assembly controls the timing and the location of cell division. One of the functions of the FtsZ ring is to recruit other cell division proteins to the septum to produce a new cell wall between the dividing cells. Binds GTP and shows GTPase activity. The sequence is that of Cell division protein FtsZ from Haemophilus influenzae (strain ATCC 51907 / DSM 11121 / KW20 / Rd).